The primary structure comprises 359 residues: 3-dehydroquinate synthase (359 aa).

NAD(+) contacts are provided by residues 72–77 (EGEIHK), 106–110 (GVIGD), 130–131 (TS), Lys-143, Lys-152, and 170–173 (CLKT). Residues Glu-185, His-248, and His-264 each contribute to the Zn(2+) site.

The protein belongs to the sugar phosphate cyclases superfamily. Dehydroquinate synthase family. Co(2+) serves as cofactor. Zn(2+) is required as a cofactor. The cofactor is NAD(+).

The protein resides in the cytoplasm. It catalyses the reaction 7-phospho-2-dehydro-3-deoxy-D-arabino-heptonate = 3-dehydroquinate + phosphate. It participates in metabolic intermediate biosynthesis; chorismate biosynthesis; chorismate from D-erythrose 4-phosphate and phosphoenolpyruvate: step 2/7. Catalyzes the conversion of 3-deoxy-D-arabino-heptulosonate 7-phosphate (DAHP) to dehydroquinate (DHQ). The polypeptide is 3-dehydroquinate synthase (Dehalococcoides mccartyi (strain ATCC BAA-2100 / JCM 16839 / KCTC 5957 / BAV1)).